The following is a 667-amino-acid chain: Tripartite terminase subunit 3 (667 aa).

Residues 208–215 (VPRRHGKT) carry the Walker A motif motif. Positions 301–306 (LLIVDE) match the Walker B motif motif. Glu306 functions as the For ATPase activity in the catalytic mechanism. Catalysis depends on for nuclease activity residues Asp459, Glu530, and Asp644.

Belongs to the herpesviridae TRM3 protein family. Interacts with the terminase subunits TRM1 and TRM2. Interacts with portal protein.

Its subcellular location is the host nucleus. Its function is as follows. Component of the molecular motor that translocates viral genomic DNA in empty capsid during DNA packaging. Forms a tripartite terminase complex together with TRM1 and TRM2 in the host cytoplasm. Once the complex reaches the host nucleus, it interacts with the capsid portal vertex. This portal forms a ring in which genomic DNA is translocated into the capsid. TRM3 carries an RNase H-like nuclease activity that plays an important role for the cleavage of concatemeric viral DNA into unit length genomes. The sequence is that of Tripartite terminase subunit 3 from Human herpesvirus 6A (strain Uganda-1102) (HHV-6 variant A).